The following is a 91-amino-acid chain: Putative ribonuclease inhibitor YrdF (91 aa).

This sequence belongs to the barstar family.

Its subcellular location is the cytoplasm. This Bacillus subtilis (strain 168) protein is Putative ribonuclease inhibitor YrdF (yrdF).